The chain runs to 519 residues: Trichothecene 15-O-acetyltransferase TRI3 (519 aa).

Position 414 (His414) interacts with 15-deacetylcalonectrin.

This sequence belongs to the trichothecene O-acetyltransferase family.

It participates in sesquiterpene biosynthesis; trichothecene biosynthesis. In terms of biological role, 15-O-acetyltransferase; part of the core gene cluster that mediates the biosynthesis of trichothecenes, a very large family of chemically related bicyclic sesquiterpene compounds acting as mycotoxins, including T2-toxin. The biosynthesis of trichothecenes begins with the cyclization of farnesyl diphosphate to trichodiene and is catalyzed by the trichodiene synthase TRI5. Trichodiene undergoes a series of oxygenations catalyzed by the cytochrome P450 monooxygenase TRI4. TRI4 controls the addition of four oxygens at C-2, C-3, C-11, and the C-12, C-13-epoxide to form the intermediate isotrichotriol. Isotrichotriol then undergoes a non-enzymatic isomerization and cyclization to form isotrichodermol. During this process, the oxygen at the C-2 position becomes the pyran ring oxygen and the hydroxyl group at C-11 is lost. More complex type A trichothecenes are built by modifying isotrichodermol through a series of paired hydroxylation and acetylation or acylation steps. Isotrichodermol is converted to isotrichodermin by the acetyltransferase TRI101. TRI101 encodes a C-3 transacetylase that acts as a self-protection or resistance factor during biosynthesis and that the presence of a free C-3 hydroxyl group is a key component of Fusarium trichothecene phytotoxicity. A second hydroxyl group is added to C-15 by the trichothecene C-15 hydroxylase TRI11, producing 15-decalonectrin, which is then acetylated by TRI3, producing calonectrin. A third hydroxyl group is added at C-4 by the cytochrome P450 monooxygenase TRI13, converting calonectrin to 3,15-diacetoxyspirpenol, which is subsequently acetylated by the acetyltransferase TRI7. A fourth hydroxyl group is added to C-8 by the cytochrome P450 monooxygenase TRI1, followed by the addition of an isovaleryl moiety by TRI16. Finally, the acetyl group is removed from the C-3 position by the trichothecene C-3 esterase TRI8 to produce T-2 toxin. This Fusarium sporotrichioides protein is Trichothecene 15-O-acetyltransferase TRI3.